Consider the following 102-residue polypeptide: Protein translation factor SUI1 homolog (102 aa).

This sequence belongs to the SUI1 family.

This Cenarchaeum symbiosum (strain A) protein is Protein translation factor SUI1 homolog.